The following is a 784-amino-acid chain: Cyclin-dependent kinase 11B (784 aa).

Basic and acidic residues predominate over residues Gln-18 to Ile-60. Residues Gln-18 to Ala-401 are disordered. Ser-47 and Ser-72 each carry phosphoserine. The segment covering Glu-95–Ser-113 has biased composition (basic residues). Composition is skewed to basic and acidic residues over residues His-114–His-131, Arg-138–Lys-227, and Pro-238–Leu-263. Ser-115 carries the post-translational modification Phosphoserine. Ser-270 carries the post-translational modification Phosphoserine. The span at Ser-278–Gly-289 shows a compositional bias: low complexity. Acidic residues-rich tracts occupy residues Ser-290–Glu-353 and Asp-372–Gly-381. Residues Phe-427 to Phe-712 form the Protein kinase domain. Residues Ile-433–Val-441 and Lys-456 each bind ATP. Ser-471 carries the post-translational modification Phosphoserine; by CDK7. Phosphothreonine; by CDK7 is present on Thr-477. Asp-551 (proton acceptor) is an active-site residue. Residue Ser-578 is modified to Phosphoserine. Tyr-583 is subject to Phosphotyrosine. Thr-584 carries the post-translational modification Phosphothreonine. A Glycyl lysine isopeptide (Lys-Gly) (interchain with G-Cter in SUMO2) cross-link involves residue Lys-630. The disordered stretch occupies residues Ser-722–Phe-784. At Thr-740 the chain carries Phosphothreonine. Phosphoserine is present on Ser-741.

The protein belongs to the protein kinase superfamily. CMGC Ser/Thr protein kinase family. CDC2/CDKX subfamily. In terms of assembly, may interact PAK1 and RANBP9. p110C interacts with RNPS1. Interacts with CCND3. Interacts with CCNL1 and CCNL2. Forms complexes with pre-mRNA-splicing factors, including at least SRSF1, SRSF2 AND SRSF7/SLU7. It depends on Mg(2+) as a cofactor. In terms of processing, phosphorylation at Ser-115 creates a binding site for 14-3-3 proteins.

It carries out the reaction L-seryl-[protein] + ATP = O-phospho-L-seryl-[protein] + ADP + H(+). The catalysed reaction is L-threonyl-[protein] + ATP = O-phospho-L-threonyl-[protein] + ADP + H(+). Its activity is regulated as follows. Phosphorylation at Thr-437 or Tyr-438 inactivates the enzyme, while phosphorylation at Thr-584 activates it. Functionally, plays multiple roles in cell cycle progression, cytokinesis and apoptosis. Involved in pre-mRNA splicing in a kinase activity-dependent manner. May act as a negative regulator of normal cell cycle progression. In Mus musculus (Mouse), this protein is Cyclin-dependent kinase 11B (Cdk11b).